The sequence spans 253 residues: Triosephosphate isomerase (253 aa).

9–11 is a substrate binding site; that stretch reads NWK. Histidine 96 serves as the catalytic Electrophile. Residue glutamate 169 is the Proton acceptor of the active site. Substrate-binding positions include glycine 175, serine 215, and 236–237; that span reads GG.

It belongs to the triosephosphate isomerase family. In terms of assembly, homodimer.

It is found in the cytoplasm. It carries out the reaction D-glyceraldehyde 3-phosphate = dihydroxyacetone phosphate. It participates in carbohydrate biosynthesis; gluconeogenesis. The protein operates within carbohydrate degradation; glycolysis; D-glyceraldehyde 3-phosphate from glycerone phosphate: step 1/1. Its function is as follows. Involved in the gluconeogenesis. Catalyzes stereospecifically the conversion of dihydroxyacetone phosphate (DHAP) to D-glyceraldehyde-3-phosphate (G3P). This Borrelia garinii subsp. bavariensis (strain ATCC BAA-2496 / DSM 23469 / PBi) (Borreliella bavariensis) protein is Triosephosphate isomerase.